The primary structure comprises 791 residues: Penicillin-binding protein 1A (791 aa).

The Cytoplasmic segment spans residues 1 to 6 (MYKSLF). The helical; Signal-anchor for type II membrane protein transmembrane segment at 7 to 27 (FCLKILALLFLIGCGIVAYII) threads the bilayer. Residues 28-791 (YYYSRDLPDY…TEKDQSQEIY (764 aa)) are Periplasmic-facing. The tract at residues 49–220 (TRIYSRDGKL…SELNPEKNYA (172 aa)) is transglycosylase. Glutamate 87 (proton donor; for transglycosylase activity) is an active-site residue. Positions 398–711 (DVIVVEPVKD…SSVVLPIFID (314 aa)) are transpeptidase. The Acyl-ester intermediate; for transpeptidase activity role is filled by serine 457.

In the N-terminal section; belongs to the glycosyltransferase 51 family. It in the C-terminal section; belongs to the transpeptidase family.

It localises to the cell inner membrane. It catalyses the reaction [GlcNAc-(1-&gt;4)-Mur2Ac(oyl-L-Ala-gamma-D-Glu-L-Lys-D-Ala-D-Ala)](n)-di-trans,octa-cis-undecaprenyl diphosphate + beta-D-GlcNAc-(1-&gt;4)-Mur2Ac(oyl-L-Ala-gamma-D-Glu-L-Lys-D-Ala-D-Ala)-di-trans,octa-cis-undecaprenyl diphosphate = [GlcNAc-(1-&gt;4)-Mur2Ac(oyl-L-Ala-gamma-D-Glu-L-Lys-D-Ala-D-Ala)](n+1)-di-trans,octa-cis-undecaprenyl diphosphate + di-trans,octa-cis-undecaprenyl diphosphate + H(+). It carries out the reaction Preferential cleavage: (Ac)2-L-Lys-D-Ala-|-D-Ala. Also transpeptidation of peptidyl-alanyl moieties that are N-acyl substituents of D-alanine.. It functions in the pathway cell wall biogenesis; peptidoglycan biosynthesis. Its function is as follows. Cell wall formation. Synthesis of cross-linked peptidoglycan from the lipid intermediates. The enzyme has a penicillin-insensitive transglycosylase N-terminal domain (formation of linear glycan strands) and a penicillin-sensitive transpeptidase C-terminal domain (cross-linking of the peptide subunits). The protein is Penicillin-binding protein 1A (mrcA) of Rickettsia bellii (strain RML369-C).